Reading from the N-terminus, the 475-residue chain is Bifunctional protein HldE (475 aa).

Residues 1 to 318 form a ribokinase region; it reads MKITLPEFGK…ANALYTEQET (318 aa). 195–198 contributes to the ATP binding site; sequence NMSE. Aspartate 264 is an active-site residue. A cytidylyltransferase region spans residues 344–475; it reads MTNGCFDILH…DIIKTIRERG (132 aa).

In the N-terminal section; belongs to the carbohydrate kinase PfkB family. This sequence in the C-terminal section; belongs to the cytidylyltransferase family. Homodimer.

The enzyme catalyses D-glycero-beta-D-manno-heptose 7-phosphate + ATP = D-glycero-beta-D-manno-heptose 1,7-bisphosphate + ADP + H(+). It catalyses the reaction D-glycero-beta-D-manno-heptose 1-phosphate + ATP + H(+) = ADP-D-glycero-beta-D-manno-heptose + diphosphate. The protein operates within nucleotide-sugar biosynthesis; ADP-L-glycero-beta-D-manno-heptose biosynthesis; ADP-L-glycero-beta-D-manno-heptose from D-glycero-beta-D-manno-heptose 7-phosphate: step 1/4. It functions in the pathway nucleotide-sugar biosynthesis; ADP-L-glycero-beta-D-manno-heptose biosynthesis; ADP-L-glycero-beta-D-manno-heptose from D-glycero-beta-D-manno-heptose 7-phosphate: step 3/4. Its function is as follows. Catalyzes the phosphorylation of D-glycero-D-manno-heptose 7-phosphate at the C-1 position to selectively form D-glycero-beta-D-manno-heptose-1,7-bisphosphate. Catalyzes the ADP transfer from ATP to D-glycero-beta-D-manno-heptose 1-phosphate, yielding ADP-D-glycero-beta-D-manno-heptose. In Aeromonas salmonicida (strain A449), this protein is Bifunctional protein HldE.